We begin with the raw amino-acid sequence, 188 residues long: tRNA(Phe) 7-((3-amino-3-carboxypropyl)-4-demethylwyosine(37)-N(4))-methyltransferase (188 aa).

This sequence belongs to the TYW3 family.

The catalysed reaction is 4-demethyl-7-[(3S)-3-amino-3-carboxypropyl]wyosine(37) in tRNA(Phe) + S-adenosyl-L-methionine = 7-[(3S)-3-amino-3-carboxypropyl]wyosine(37) in tRNA(Phe) + S-adenosyl-L-homocysteine + H(+). S-adenosyl-L-methionine-dependent methyltransferase that acts as a component of the wyosine derivatives biosynthesis pathway. Probably methylates N-4 position of wybutosine-86 to produce wybutosine-72. The sequence is that of tRNA(Phe) 7-((3-amino-3-carboxypropyl)-4-demethylwyosine(37)-N(4))-methyltransferase from Aeropyrum pernix (strain ATCC 700893 / DSM 11879 / JCM 9820 / NBRC 100138 / K1).